Consider the following 561-residue polypeptide: Malto-oligosyltrehalose trehalohydrolase (561 aa).

253–258 provides a ligand contact to substrate; sequence RLDAVH. The active-site Nucleophile is aspartate 255. Catalysis depends on glutamate 286, which acts as the Proton donor. Substrate is bound by residues 311 to 315 and 379 to 384; these read DDFHH and HDQVGN.

It belongs to the glycosyl hydrolase 13 family. As to quaternary structure, homodimer.

It is found in the cytoplasm. The enzyme catalyses hydrolysis of (1-&gt;4)-alpha-D-glucosidic linkage in 4-alpha-D-[(1-&gt;4)-alpha-D-glucanosyl]n trehalose to yield trehalose and (1-&gt;4)-alpha-D-glucan.. It participates in glycan biosynthesis; trehalose biosynthesis. In Saccharolobus solfataricus (strain ATCC 35092 / DSM 1617 / JCM 11322 / P2) (Sulfolobus solfataricus), this protein is Malto-oligosyltrehalose trehalohydrolase (treZ).